Consider the following 635-residue polypeptide: Rab11 family-interacting protein 4 (635 aa).

In terms of domain architecture, EF-hand spans 49 to 84 (GQGEEVEKLVKCLDPNDLGRINFKDFCRGVFAMKGC). The Ca(2+) site is built by D62, N64, R68, and D73. The interval 82–635 (KGCEELLKDV…HNPSILEIKH (554 aa)) is necessary for interaction with RAB11A, subcellular location, homo- or heterooligomerization. Disordered regions lie at residues 147-176 (GPQE…EKEP) and 216-258 (EDYG…QTPR). Over residues 216 to 225 (EDYGEGDDVD) the composition is skewed to acidic residues. Positions 279-615 (KINLLNDLEA…EEINFRLRQY (337 aa)) form a coiled coil. The 63-residue stretch at 572-634 (EAKNLFATQT…DHNPSILEIK (63 aa)) folds into the FIP-RBD domain.

As to quaternary structure, homodimer. Forms a complex with Rab11 (RAB11A or RAB11B) and ARF6. Interacts with RAB11A; the interaction is direct. Forms a heterooligomeric complex with RAB11FIP2, RAB11FIP3 and RAB11FIP5. Interacts with ECPAS. In terms of tissue distribution, strongly expressed in the developing retina. Expressed predominantly in neural tissues.

The protein localises to the recycling endosome membrane. It is found in the cleavage furrow. It localises to the midbody. Its subcellular location is the cytoplasmic vesicle. In terms of biological role, acts as a regulator of endocytic traffic by participating in membrane delivery. Required for the abscission step in cytokinesis, possibly by acting as an 'address tag' delivering recycling endosome membranes to the cleavage furrow during late cytokinesis. May play a role in differentiation during retinal development, in a Rab11-independent manner. In Mus musculus (Mouse), this protein is Rab11 family-interacting protein 4 (Rab11fip4).